A 99-amino-acid chain; its full sequence is Beta-2-microglobulin (99 aa).

Residues 5–93 (PRVQVYSRHP…HITLSEPKIV (89 aa)) form the Ig-like C1-type domain. A disulfide bridge connects residues C25 and C80.

This sequence belongs to the beta-2-microglobulin family. Heterodimer of an alpha chain and a beta chain. Beta-2-microglobulin is the beta-chain of major histocompatibility complex class I molecules.

The protein resides in the secreted. Component of the class I major histocompatibility complex (MHC). Involved in the presentation of peptide antigens to the immune system. This chain is Beta-2-microglobulin (B2M), found in Cavia porcellus (Guinea pig).